Reading from the N-terminus, the 296-residue chain is Nucleotide-binding protein SPT_1506 (296 aa).

Position 13–20 (13–20 (GMSGAGKT)) interacts with ATP. Residue 63–66 (DMRS) participates in GTP binding.

The protein belongs to the RapZ-like family.

Its function is as follows. Displays ATPase and GTPase activities. The chain is Nucleotide-binding protein SPT_1506 from Streptococcus pneumoniae (strain Taiwan19F-14).